Here is a 78-residue protein sequence, read N- to C-terminus: Large ribosomal subunit protein bL28 (78 aa).

Residues 1–21 (MSKVCQVTGKRPITGHNVSHA) are disordered.

Belongs to the bacterial ribosomal protein bL28 family.

This is Large ribosomal subunit protein bL28 from Cellvibrio japonicus (strain Ueda107) (Pseudomonas fluorescens subsp. cellulosa).